We begin with the raw amino-acid sequence, 235 residues long: Phosphoribosylaminoimidazole-succinocarboxamide synthase (235 aa).

The protein belongs to the SAICAR synthetase family.

The catalysed reaction is 5-amino-1-(5-phospho-D-ribosyl)imidazole-4-carboxylate + L-aspartate + ATP = (2S)-2-[5-amino-1-(5-phospho-beta-D-ribosyl)imidazole-4-carboxamido]succinate + ADP + phosphate + 2 H(+). The protein operates within purine metabolism; IMP biosynthesis via de novo pathway; 5-amino-1-(5-phospho-D-ribosyl)imidazole-4-carboxamide from 5-amino-1-(5-phospho-D-ribosyl)imidazole-4-carboxylate: step 1/2. This chain is Phosphoribosylaminoimidazole-succinocarboxamide synthase, found in Prosthecochloris aestuarii (strain DSM 271 / SK 413).